Here is a 946-residue protein sequence, read N- to C-terminus: Leucine--tRNA ligase (946 aa).

The short motif at 40 to 51 (PYPSGAGLHVGH) is the 'HIGH' region element. A 'KMSKS' region motif is present at residues 719-723 (KMSKS). Residue Lys722 participates in ATP binding.

The protein belongs to the class-I aminoacyl-tRNA synthetase family.

Its subcellular location is the cytoplasm. The enzyme catalyses tRNA(Leu) + L-leucine + ATP = L-leucyl-tRNA(Leu) + AMP + diphosphate. In Parabacteroides distasonis (strain ATCC 8503 / DSM 20701 / CIP 104284 / JCM 5825 / NCTC 11152), this protein is Leucine--tRNA ligase.